The primary structure comprises 455 residues: Oxidative stress induced growth inhibitor homolog osgn-1 (455 aa).

This sequence belongs to the OKL38 family. NADPH serves as cofactor.

The protein resides in the midbody. Functionally, monooxygenase catalytic activity. Involved in regulation of cytokinesis; promotes rho-1/RhoA activity, probably acting locally at the midbody in late cytokinesis. Monooxygenase activity is required to stabilize structures between primordial germ cells (PGCs), termed intercellular bridges. Dispensable for fertility. The polypeptide is Oxidative stress induced growth inhibitor homolog osgn-1 (Caenorhabditis elegans).